A 381-amino-acid polypeptide reads, in one-letter code: Peptidoglycan glycosyltransferase MrdB (381 aa).

10 helical membrane passes run 11-31 (FDLLPFVFIIPLLVVSFLLIF), 40-60 (KQGVYYAIGFILFWIVFFIPF), 66-86 (WLFVFYWACVILLALVDFMGY), 99-119 (FISITLQPSEPVKIAILLLLA), 132-152 (YDWGMFLKLSFYICLPAALIL), 156-176 (DLGTALIVLIMGFGILLIVGL), 180-200 (VWLPLFIALLVASPIAYHFLH), 263-283 (FGFLGAMLLFAIYIGLSLHLF), 297-317 (IVALGISILIFVYSSVNIAMT), and 328-348 (LPLFSYGGSSFITFMILFGIL).

It belongs to the SEDS family. MrdB/RodA subfamily.

Its subcellular location is the cell inner membrane. The enzyme catalyses [GlcNAc-(1-&gt;4)-Mur2Ac(oyl-L-Ala-gamma-D-Glu-L-Lys-D-Ala-D-Ala)](n)-di-trans,octa-cis-undecaprenyl diphosphate + beta-D-GlcNAc-(1-&gt;4)-Mur2Ac(oyl-L-Ala-gamma-D-Glu-L-Lys-D-Ala-D-Ala)-di-trans,octa-cis-undecaprenyl diphosphate = [GlcNAc-(1-&gt;4)-Mur2Ac(oyl-L-Ala-gamma-D-Glu-L-Lys-D-Ala-D-Ala)](n+1)-di-trans,octa-cis-undecaprenyl diphosphate + di-trans,octa-cis-undecaprenyl diphosphate + H(+). It participates in cell wall biogenesis; peptidoglycan biosynthesis. In terms of biological role, peptidoglycan polymerase that is essential for cell wall elongation. The polypeptide is Peptidoglycan glycosyltransferase MrdB (Helicobacter pylori (strain ATCC 700392 / 26695) (Campylobacter pylori)).